The primary structure comprises 641 residues: 1-deoxy-D-xylulose-5-phosphate synthase (641 aa).

Residues His-79 and 120–122 (GHS) contribute to the thiamine diphosphate site. Asp-151 contacts Mg(2+). Thiamine diphosphate-binding positions include 152–153 (GS), Asn-180, Tyr-290, and Glu-372. Position 180 (Asn-180) interacts with Mg(2+).

This sequence belongs to the transketolase family. DXPS subfamily. Homodimer. The cofactor is Mg(2+). Thiamine diphosphate is required as a cofactor.

It catalyses the reaction D-glyceraldehyde 3-phosphate + pyruvate + H(+) = 1-deoxy-D-xylulose 5-phosphate + CO2. It participates in metabolic intermediate biosynthesis; 1-deoxy-D-xylulose 5-phosphate biosynthesis; 1-deoxy-D-xylulose 5-phosphate from D-glyceraldehyde 3-phosphate and pyruvate: step 1/1. Functionally, catalyzes the acyloin condensation reaction between C atoms 2 and 3 of pyruvate and glyceraldehyde 3-phosphate to yield 1-deoxy-D-xylulose-5-phosphate (DXP). This chain is 1-deoxy-D-xylulose-5-phosphate synthase, found in Rhodopseudomonas palustris (strain TIE-1).